Reading from the N-terminus, the 613-residue chain is DNA mismatch repair protein MutL (613 aa).

A disordered region spans residues 364–393 (EPAVARQPEAPRYSSGASAPRPTGANYPHA).

This sequence belongs to the DNA mismatch repair MutL/HexB family.

In terms of biological role, this protein is involved in the repair of mismatches in DNA. It is required for dam-dependent methyl-directed DNA mismatch repair. May act as a 'molecular matchmaker', a protein that promotes the formation of a stable complex between two or more DNA-binding proteins in an ATP-dependent manner without itself being part of a final effector complex. The protein is DNA mismatch repair protein MutL of Enterobacter sp. (strain 638).